The sequence spans 527 residues: N-acetylglutamate synthase, mitochondrial (527 aa).

The transit peptide at 1–18 (MATAWVATALRSAAAARR) directs the protein to the mitochondrion. Residues 14–91 (AAARRLRSPG…PLESPAPPAG (78 aa)) are disordered. The segment at 19 to 369 (LRSPGGPGGS…CGTLFKNAER (351 aa)) is amino-acid kinase domain (AAK). The segment covering 54–63 (AHAEDAEGAK) has biased composition (basic and acidic residues). Residues 77–89 (TPLPTPLESPAPP) are compositionally biased toward pro residues. One can recognise an N-acetyltransferase domain in the interval 368 to 519 (ERMLRVRNLD…HAKGLPDSFC (152 aa)). Residues K394, K437, and 467 to 472 (RSRVTN) contribute to the substrate site.

The protein belongs to the acetyltransferase family. As to quaternary structure, homodimer. Homotetramer. Post-translationally, probably processed by mitochondrial processing peptidase (MPP). The long form has not yet been isolated. In terms of tissue distribution, highly expressed in the liver and small intestine. Weakly expressed in the kidney, spleen and testis.

The protein resides in the mitochondrion matrix. It carries out the reaction L-glutamate + acetyl-CoA = N-acetyl-L-glutamate + CoA + H(+). The protein operates within amino-acid biosynthesis; L-arginine biosynthesis; N(2)-acetyl-L-ornithine from L-glutamate: step 1/4. With respect to regulation, increased by L-arginine. In terms of biological role, plays a role in the regulation of ureagenesis by producing the essential cofactor N-acetylglutamate (NAG), thus modulating carbamoylphosphate synthase I (CPS1) activity. This is N-acetylglutamate synthase, mitochondrial (Nags) from Mus musculus (Mouse).